The sequence spans 133 residues: Protein msa (133 aa).

4 helical membrane-spanning segments follow: residues 3-23 (YLIL…AIGL), 27-47 (ILAA…ILFF), 55-75 (YIFF…VHLM), and 103-123 (FGFD…IVLY).

It is found in the cell membrane. Accessory element involved in the expression of sarA and several virulence factors. Modulates SarA production and/or function in a strain-dependent manner. Affects the transcription of the accessory gene regulator (agr) and genes encoding virulence factors including alpha toxin (hla) and protein A (spa). The protein is Protein msa (msa) of Staphylococcus aureus (strain USA300).